Here is a 364-residue protein sequence, read N- to C-terminus: MSGLFETLGRRALFTFDAEQAHGLSITGLKTGIVTCRTPEDPALSVKVAGLKFPNPLGMAAGYDKNAEVPDALLKLGFGFAEVGTLTPRPQSGNPRPRIFRLVDDKAVINRLGFNNEGHEAAFKRLSRRAGKSGIVGVNIGANKDAEDRIADYVAGIRRFYQLARYFTVNISSPNTPGLRNLQAREALHELLSRVLEARDEEGNMCTLKRPVFLKIAPDLTDEELDDIAAEADAQKLDGIIVSNTTLSRSGLKNPENSNETGGLSGAPLFERSTVVLARMRERVGPDMPLIGVGGIDSAETALAKIKAGADLVQLYSGLIYRGPGLPGEILRGLSTAIKYEGVSSIAELRDRDTKEWAARKLIS.

FMN is bound by residues 61–65 (AGYDK) and T85. Residue K65 coordinates substrate. 110-114 (NRLGF) lines the substrate pocket. Positions 139 and 170 each coordinate FMN. Position 170 (N170) interacts with substrate. S173 (nucleophile) is an active-site residue. N175 contributes to the substrate binding site. FMN contacts are provided by K215 and S243. A substrate-binding site is contributed by 244–245 (NT). FMN contacts are provided by residues G266, G295, and 316–317 (YS).

Belongs to the dihydroorotate dehydrogenase family. Type 2 subfamily. As to quaternary structure, monomer. It depends on FMN as a cofactor.

Its subcellular location is the cell membrane. It catalyses the reaction (S)-dihydroorotate + a quinone = orotate + a quinol. Its pathway is pyrimidine metabolism; UMP biosynthesis via de novo pathway; orotate from (S)-dihydroorotate (quinone route): step 1/1. Catalyzes the conversion of dihydroorotate to orotate with quinone as electron acceptor. This is Dihydroorotate dehydrogenase (quinone) from Brucella melitensis biotype 2 (strain ATCC 23457).